Consider the following 202-residue polypeptide: MVSIHNSFILLMLMISICFCEKCLTNEECDLKWPDAICVRGRCRCSENTIRKKSASREWVCLATNDATGNSGPPLTCPTPEGAGYQVMYRKDGEPVKCSSKKKPDTCPEGFECIQGLSILGALDGVCCPDRAKTCVHPIFDHPDDGYLSRWGFDGEQCIEFKWNPERPSSANNFKTRAHCEDYCIGSINGITNYHQSNFHLF.

The N-terminal stretch at 1-20 (MVSIHNSFILLMLMISICFC) is a signal peptide. Positions 135-184 (CVHPIFDHPDDGYLSRWGFDGEQCIEFKWNPERPSSANNFKTRAHCEDYC) constitute a BPTI/Kunitz inhibitor domain. Cystine bridges form between C135/C184 and C158/C180.

In terms of tissue distribution, expressed in larval and adult hypodermis, hermaphrodite vulva and adult excretory cell and duct.

In terms of biological role, appears to lack serine protease inhibitor activity in vitro when tested with bovine pancreatic alpha-chymotrypsin and elastase. Involved in cuticle biosynthesis. This chain is Kunitz-type protein bli-5, found in Caenorhabditis elegans.